A 117-amino-acid polypeptide reads, in one-letter code: Anti-sigma F factor antagonist (117 aa).

One can recognise an STAS domain in the interval 3–113 (LQIEMEHHRG…DNEVNALTEL (111 aa)). Serine 58 bears the Phosphoserine mark.

It belongs to the anti-sigma-factor antagonist family. Post-translationally, phosphorylated by SpoIIAB on a serine residue.

In the phosphorylated form it could act as an anti-anti-sigma factor that counteracts SpoIIAB and thus releases sigma f from inhibition. The chain is Anti-sigma F factor antagonist (spoIIAA) from Paenibacillus polymyxa (Bacillus polymyxa).